The primary structure comprises 165 residues: Small ribosomal subunit protein uS5 (165 aa).

One can recognise an S5 DRBM domain in the interval 10–73 (QIEKLISLNR…TSARKNLRFV (64 aa)).

It belongs to the universal ribosomal protein uS5 family. Part of the 30S ribosomal subunit. Contacts proteins S4 and S8.

In terms of biological role, with S4 and S12 plays an important role in translational accuracy. Located at the back of the 30S subunit body where it stabilizes the conformation of the head with respect to the body. This chain is Small ribosomal subunit protein uS5, found in Borreliella afzelii (strain PKo) (Borrelia afzelii).